A 295-amino-acid polypeptide reads, in one-letter code: MSAANPETPNSTISREASTQSSSAAASQGYVLPEGKIMPNTVFVGGIDVRMDETEIRSFFARYGSVKEVKIITDRTGVSKGYGFVSFFNDVDVQKIVESQINFHGKKLKLGPAIRKQNLCAYHVQPRPLVFNHPPPPQFQNVWTNPNTETYMQPPTTMNPITQYVQAYPTYPNSPVQVITGYQLPVYNYQMPPQWPVGEQRSYVVPPAYSAVNYHCNEVDPGAEVVPNECSVHEATPPSGNGPQKKSVDRSIQTVVSCLFNPENRLRNTVVTQDDYFKDKRVHHFRRSRAMLKSV.

Residues 1 to 10 (MSAANPETPN) show a composition bias toward polar residues. A disordered region spans residues 1–25 (MSAANPETPNSTISREASTQSSSAA). The span at 11 to 25 (STISREASTQSSSAA) shows a compositional bias: low complexity. Residues 40–115 (NTVFVGGIDV…KKLKLGPAIR (76 aa)) enclose the RRM domain. The interval 80–132 (KGYGFVSFFNDVDVQKIVESQINFHGKKLKLGPAIRKQNLCAYHVQPRPLVFN) is homodimerization. In terms of domain architecture, DAZ spans 167-190 (AYPTYPNSPVQVITGYQLPVYNYQ). Position 276 is a phosphotyrosine (Tyr-276).

The protein belongs to the RRM DAZ family. Homodimer and heterodimer. Forms a heterodimer with DAZ. Interacts with BOLL, DAZAP1 and DAZAP2. Interacts with PUM2 Multiple DAZL RRMs can bind to a single RNA containing multiple GUU triplets. As to expression, testis specific.

The protein localises to the cytoplasm. Its subcellular location is the nucleus. Functionally, RNA-binding protein, which is essential for gametogenesis in both males and females. Plays a central role during spermatogenesis. Acts by binding to the 3'-UTR of mRNA, specifically recognizing GUU triplets, and thereby regulating the translation of key transcripts. This chain is Deleted in azoospermia-like (DAZL), found in Macaca fascicularis (Crab-eating macaque).